A 197-amino-acid chain; its full sequence is Large ribosomal subunit protein eL15 (197 aa).

Basic residues-rich tracts occupy residues 70–90 (PKGGRRKSRPKKGRRPKRMGK), 163–179 (RGKTGAGKKARGLRKRG), and 187–197 (PSLRAHRRRGK). Disordered regions lie at residues 70–99 (PKGGRRKSRPKKGRRPKRMGKNKFSPGKSK) and 163–197 (RGKTGAGKKARGLRKRGKGAEKVRPSLRAHRRRGK).

Belongs to the eukaryotic ribosomal protein eL15 family.

This is Large ribosomal subunit protein eL15 from Methanopyrus kandleri (strain AV19 / DSM 6324 / JCM 9639 / NBRC 100938).